A 276-amino-acid polypeptide reads, in one-letter code: Bis(5'-nucleosyl)-tetraphosphatase, symmetrical (276 aa).

The protein belongs to the Ap4A hydrolase family.

The catalysed reaction is P(1),P(4)-bis(5'-adenosyl) tetraphosphate + H2O = 2 ADP + 2 H(+). Hydrolyzes diadenosine 5',5'''-P1,P4-tetraphosphate to yield ADP. This is Bis(5'-nucleosyl)-tetraphosphatase, symmetrical from Mannheimia succiniciproducens (strain KCTC 0769BP / MBEL55E).